We begin with the raw amino-acid sequence, 320 residues long: tRNA dimethylallyltransferase (320 aa).

ATP is bound at residue G16–T23. Position 18 to 23 (T18 to T23) interacts with substrate. 3 interaction with substrate tRNA regions span residues D41–L44, Q165–R169, and R247–R252.

Belongs to the IPP transferase family. As to quaternary structure, monomer. It depends on Mg(2+) as a cofactor.

It catalyses the reaction adenosine(37) in tRNA + dimethylallyl diphosphate = N(6)-dimethylallyladenosine(37) in tRNA + diphosphate. Catalyzes the transfer of a dimethylallyl group onto the adenine at position 37 in tRNAs that read codons beginning with uridine, leading to the formation of N6-(dimethylallyl)adenosine (i(6)A). The chain is tRNA dimethylallyltransferase from Azoarcus sp. (strain BH72).